The following is a 306-amino-acid chain: Protoheme IX farnesyltransferase (306 aa).

Transmembrane regions (helical) follow at residues Val32–Leu52, Ile58–Val78, Asn103–Val123, Leu126–Leu146, Asn153–Thr173, Ala180–Ile200, Ile227–Ser247, Trp249–Leu269, and Ala278–Leu298.

It belongs to the UbiA prenyltransferase family. Protoheme IX farnesyltransferase subfamily.

The protein localises to the cell inner membrane. It catalyses the reaction heme b + (2E,6E)-farnesyl diphosphate + H2O = Fe(II)-heme o + diphosphate. Its pathway is porphyrin-containing compound metabolism; heme O biosynthesis; heme O from protoheme: step 1/1. In terms of biological role, converts heme B (protoheme IX) to heme O by substitution of the vinyl group on carbon 2 of heme B porphyrin ring with a hydroxyethyl farnesyl side group. The polypeptide is Protoheme IX farnesyltransferase (Colwellia psychrerythraea (strain 34H / ATCC BAA-681) (Vibrio psychroerythus)).